A 207-amino-acid chain; its full sequence is Recombination protein RecR (207 aa).

The C4-type zinc finger occupies 62-77 (CSRCNTFTEQDVCETC). One can recognise a Toprim domain in the interval 85 to 184 (SVLCVVETPA…KVSRLARGVP (100 aa)).

The protein belongs to the RecR family.

Functionally, may play a role in DNA repair. It seems to be involved in an RecBC-independent recombinational process of DNA repair. It may act with RecF and RecO. In Ralstonia nicotianae (strain ATCC BAA-1114 / GMI1000) (Ralstonia solanacearum), this protein is Recombination protein RecR.